The chain runs to 342 residues: Methionine import ATP-binding protein MetN (342 aa).

The 240-residue stretch at I2–V241 folds into the ABC transporter domain. G38 to S45 provides a ligand contact to ATP.

Belongs to the ABC transporter superfamily. Methionine importer (TC 3.A.1.24) family. The complex is composed of two ATP-binding proteins (MetN), two transmembrane proteins (MetI) and a solute-binding protein (MetQ).

It is found in the cell membrane. The enzyme catalyses L-methionine(out) + ATP + H2O = L-methionine(in) + ADP + phosphate + H(+). It carries out the reaction D-methionine(out) + ATP + H2O = D-methionine(in) + ADP + phosphate + H(+). Part of the ABC transporter complex MetNIQ involved in methionine import. Responsible for energy coupling to the transport system. This chain is Methionine import ATP-binding protein MetN, found in Geobacillus kaustophilus (strain HTA426).